The sequence spans 284 residues: Tropomyosin alpha-3 chain (284 aa).

M1 bears the N-acetylmethionine mark. Residues 1–40 (MEAIKKKMQMLKLDKENALDRAEQAEAEQKQAEERSKQLE) are disordered. Positions 1-284 (MEAIKKKMQM…DHALNDMTSI (284 aa)) form a coiled coil. Positions 12 to 40 (KLDKENALDRAEQAEAEQKQAEERSKQLE) are enriched in basic and acidic residues. T53 bears the Phosphothreonine mark. Residues S61 and S87 each carry the phosphoserine modification. T108 and T252 each carry phosphothreonine. Residue Y261 is modified to Phosphotyrosine. A Phosphoserine modification is found at S271. T282 carries the phosphothreonine modification. Phosphoserine is present on S283.

It belongs to the tropomyosin family. As to quaternary structure, homodimer. Heterodimer of an alpha (TPM1, TPM3 or TPM4) and a beta (TPM2) chain. Interacts with TMOD1. Interacts with TNNT1.

The protein resides in the cytoplasm. It is found in the cytoskeleton. Functionally, binds to actin filaments in muscle and non-muscle cells. Plays a central role, in association with the troponin complex, in the calcium dependent regulation of vertebrate striated muscle contraction. Smooth muscle contraction is regulated by interaction with caldesmon. In non-muscle cells is implicated in stabilizing cytoskeleton actin filaments. This Sus scrofa (Pig) protein is Tropomyosin alpha-3 chain (TPM3).